Here is a 550-residue protein sequence, read N- to C-terminus: Undecaprenyl phosphate-alpha-4-amino-4-deoxy-L-arabinose arabinosyl transferase 2 (550 aa).

Helical transmembrane passes span 4–24, 81–101, 110–132, 176–196, 204–224, 255–275, 288–308, 313–333, 348–368, 381–401, and 409–429; these read LKPG…PLSF, FAVH…VYWL, WLGL…GTYA, FMTK…PWVI, VFIY…PWVI, APFW…LGLL, TQSG…FFSL, LPTY…RYAA, LLFG…WGLA, VLLG…TLRA, and AALC…QQVI.

It belongs to the glycosyltransferase 83 family.

Its subcellular location is the cell inner membrane. It carries out the reaction 4-amino-4-deoxy-alpha-L-arabinopyranosyl di-trans,octa-cis-undecaprenyl phosphate + lipid IVA = lipid IIA + di-trans,octa-cis-undecaprenyl phosphate.. It functions in the pathway lipopolysaccharide metabolism; 4-amino-4-deoxy-beta-L-arabinose-lipid A biosynthesis. In terms of biological role, catalyzes the transfer of the L-Ara4N moiety of the glycolipid undecaprenyl phosphate-alpha-L-Ara4N to lipid A. The modified arabinose is attached to lipid A and is required for resistance to polymyxin and cationic antimicrobial peptides. The polypeptide is Undecaprenyl phosphate-alpha-4-amino-4-deoxy-L-arabinose arabinosyl transferase 2 (Sodalis glossinidius (strain morsitans)).